The sequence spans 363 residues: Methylthioribose-1-phosphate isomerase (363 aa).

Asp-253 acts as the Proton donor in catalysis.

Belongs to the eIF-2B alpha/beta/delta subunits family. MtnA subfamily.

It is found in the cytoplasm. Its subcellular location is the nucleus. It catalyses the reaction 5-(methylsulfanyl)-alpha-D-ribose 1-phosphate = 5-(methylsulfanyl)-D-ribulose 1-phosphate. The protein operates within amino-acid biosynthesis; L-methionine biosynthesis via salvage pathway; L-methionine from S-methyl-5-thio-alpha-D-ribose 1-phosphate: step 1/6. Catalyzes the interconversion of methylthioribose-1-phosphate (MTR-1-P) into methylthioribulose-1-phosphate (MTRu-1-P). This chain is Methylthioribose-1-phosphate isomerase, found in Drosophila grimshawi (Hawaiian fruit fly).